We begin with the raw amino-acid sequence, 644 residues long: 1-deoxy-D-xylulose-5-phosphate synthase (644 aa).

Residues histidine 78 and 120 to 122 (GHA) contribute to the thiamine diphosphate site. Mg(2+) is bound at residue aspartate 150. Residues 151 to 152 (AA), asparagine 179, and glutamate 374 each bind thiamine diphosphate. Asparagine 179 is a binding site for Mg(2+).

It belongs to the transketolase family. DXPS subfamily. Homodimer. Mg(2+) is required as a cofactor. Thiamine diphosphate serves as cofactor.

The enzyme catalyses D-glyceraldehyde 3-phosphate + pyruvate + H(+) = 1-deoxy-D-xylulose 5-phosphate + CO2. It participates in metabolic intermediate biosynthesis; 1-deoxy-D-xylulose 5-phosphate biosynthesis; 1-deoxy-D-xylulose 5-phosphate from D-glyceraldehyde 3-phosphate and pyruvate: step 1/1. Its function is as follows. Catalyzes the acyloin condensation reaction between C atoms 2 and 3 of pyruvate and glyceraldehyde 3-phosphate to yield 1-deoxy-D-xylulose-5-phosphate (DXP). The polypeptide is 1-deoxy-D-xylulose-5-phosphate synthase (Chlamydia pneumoniae (Chlamydophila pneumoniae)).